The primary structure comprises 446 residues: Citrate/sodium symporter (446 aa).

Helical transmembrane passes span isoleucine 23 to phenylalanine 43, alanine 46 to glycine 66, isoleucine 79 to phenylalanine 99, valine 110 to leucine 130, and isoleucine 148 to isoleucine 168. Residues isoleucine 181 and glycine 183 each coordinate Na(+). The citrate site is built by asparagine 186 and glycine 187. Helical transmembrane passes span isoleucine 213–isoleucine 233, glutamate 267–lysine 287, isoleucine 289–alanine 309, glutamine 335–isoleucine 355, and valine 364–isoleucine 384. 2 residues coordinate Na(+): methionine 399 and asparagine 401. 4 residues coordinate citrate: arginine 402, glycine 404, serine 405, and arginine 428. Residues isoleucine 425–methionine 445 form a helical membrane-spanning segment.

It belongs to the 2-hydroxycarboxylate transporter (2-HCT) (TC 2.A.24) family. In terms of assembly, homodimer.

It localises to the cell inner membrane. The catalysed reaction is citrate(out) + 2 Na(+)(out) = citrate(in) + 2 Na(+)(in). Secondary active transporter that catalyzes the uptake of citrate across the membrane with the concomitant uptake of sodium. Is specific for citrate. The polypeptide is Citrate/sodium symporter (Salmonella dublin).